The chain runs to 230 residues: Flagellar L-ring protein (230 aa).

Residues 1–15 form the signal peptide; sequence MSRPPLLSSACLAAT. Cysteine 16 carries N-palmitoyl cysteine lipidation. The S-diacylglycerol cysteine moiety is linked to residue cysteine 16.

The protein belongs to the FlgH family. The basal body constitutes a major portion of the flagellar organelle and consists of four rings (L,P,S, and M) mounted on a central rod.

The protein localises to the cell outer membrane. The protein resides in the bacterial flagellum basal body. In terms of biological role, assembles around the rod to form the L-ring and probably protects the motor/basal body from shearing forces during rotation. The polypeptide is Flagellar L-ring protein (Xanthomonas oryzae pv. oryzae (strain MAFF 311018)).